Reading from the N-terminus, the 283-residue chain is Glutamate racemase (283 aa).

Substrate is bound by residues 28–29 (DS) and 60–61 (YG). The Proton donor/acceptor role is filled by Cys92. 93 to 94 (NT) contacts substrate. Catalysis depends on Cys204, which acts as the Proton donor/acceptor. Substrate is bound at residue 205-206 (TH).

This sequence belongs to the aspartate/glutamate racemases family.

It catalyses the reaction L-glutamate = D-glutamate. The protein operates within cell wall biogenesis; peptidoglycan biosynthesis. Provides the (R)-glutamate required for cell wall biosynthesis. The protein is Glutamate racemase of Salmonella choleraesuis (strain SC-B67).